The primary structure comprises 196 residues: Pyridoxal 5'-phosphate synthase subunit PdxT (196 aa).

An L-glutamine-binding site is contributed by 47 to 49; the sequence is GES. Cys-79 (nucleophile) is an active-site residue. L-glutamine is bound by residues Arg-106 and 134-135; that span reads IR. Residues His-170 and Glu-172 each act as charge relay system in the active site.

Belongs to the glutaminase PdxT/SNO family. As to quaternary structure, in the presence of PdxS, forms a dodecamer of heterodimers. Only shows activity in the heterodimer.

The enzyme catalyses aldehydo-D-ribose 5-phosphate + D-glyceraldehyde 3-phosphate + L-glutamine = pyridoxal 5'-phosphate + L-glutamate + phosphate + 3 H2O + H(+). It carries out the reaction L-glutamine + H2O = L-glutamate + NH4(+). It functions in the pathway cofactor biosynthesis; pyridoxal 5'-phosphate biosynthesis. Catalyzes the hydrolysis of glutamine to glutamate and ammonia as part of the biosynthesis of pyridoxal 5'-phosphate. The resulting ammonia molecule is channeled to the active site of PdxS. The polypeptide is Pyridoxal 5'-phosphate synthase subunit PdxT (Bacillus pumilus (strain SAFR-032)).